Reading from the N-terminus, the 792-residue chain is Terminal nucleotidyltransferase 4A (792 aa).

Residues 55-191 are disordered; that stretch reads GAAGRGSGGL…QFHPGRRKRE (137 aa). Low complexity-rich tracts occupy residues 80–97 and 105–139; these read APAALPPALLTALGPAAE and SPSLSSSSSSSSSNAESGTESPGCSSSSSSSASLG. Mg(2+)-binding residues include Asp297 and Asp299. 4 residues coordinate ATP: Gly360, Lys385, Ser403, and Tyr404. Residues 428 to 486 form the PAP-associated domain; that stretch reads NLGMLLVEFFELYGRNFNYLKTGIRIKEGGAYIAKEEIMKAMTSGYRPSMLCIEDPLLP. Residues Asn488 and Arg492 each contribute to the ATP site. Residues 601–619 are compositionally biased toward low complexity; the sequence is QLLSSGSSASSVSSLSGSD. Disordered stretches follow at residues 601-632 and 737-792; these read QLLSSGSSASSVSSLSGSDVDSDTPPCTTPSV and MKGS…SLSR. Gly residues predominate over residues 744-756; sequence TQGGGYSSVGSGG. The segment covering 764–781 has biased composition (basic residues); the sequence is RGHHQYNRTGWRRKKHTH.

This sequence belongs to the DNA polymerase type-B-like family. In terms of assembly, component of a nuclear TRAMP-like complex, an ATP-dependent exosome regulatory complex consisting of a helicase (MTREX), an oligadenylate polymerase (TENT4B or TENT4A), and a substrate specific RNA-binding factor (ZCCHC7 or ZCCHC8). Several TRAMP-like complexes exist with specific compositions and are associated with nuclear, or nucleolar RNA exosomes. Mg(2+) serves as cofactor. Mn(2+) is required as a cofactor.

The protein resides in the cytoplasm. It localises to the nucleus. Its subcellular location is the nucleoplasm. The catalysed reaction is RNA(n) + ATP = RNA(n)-3'-adenine ribonucleotide + diphosphate. Its function is as follows. Terminal nucleotidyltransferase that catalyzes preferentially the transfer of ATP and GTP on RNA 3' poly(A) tail creating a heterogeneous 3' poly(A) tail leading to mRNAs stabilization by protecting mRNAs from active deadenylation. Also functions as a catalytic subunit of a TRAMP-like complex which has a poly(A) RNA polymerase activity and is involved in a post-transcriptional quality control mechanism. Polyadenylation with short oligo(A) tails is required for the degradative activity of the exosome on several of its nuclear RNA substrates. Has no terminal uridylyltransferase activity, and does not play a role in replication-dependent histone mRNA degradation via uridylation. The sequence is that of Terminal nucleotidyltransferase 4A from Homo sapiens (Human).